The following is a 276-amino-acid chain: MIKIGSHVRFRKPDYLFGAIQESLENKANAAMIFLGPPQSTFRVKPENYKFQDYQKHFFKQIPPEDIIVHAPYIINPASPIKAQFSNDFLVKEIEKINYIGAKFLVLHPGFFTSFTKEVAKKQLISSLKSILEKTKNVILLLETMSGKGSEMCANFEEIVEIVEAVESPRIGVCLDTCHVWDAGYDLKNFPEFCKELRKTRLINYLKVIHLNDSLSPLGSKKDRHANIGKGFIGLETLRKIVFDPLFANIPKILETPYVDNKPIYDQEIALLLKKV.

Positions 70, 108, 143, 176, 179, 210, 223, 225, and 255 each coordinate Zn(2+).

Belongs to the AP endonuclease 2 family. It depends on Zn(2+) as a cofactor.

The catalysed reaction is Endonucleolytic cleavage to 5'-phosphooligonucleotide end-products.. Its function is as follows. Endonuclease IV plays a role in DNA repair. It cleaves phosphodiester bonds at apurinic or apyrimidinic (AP) sites, generating a 3'-hydroxyl group and a 5'-terminal sugar phosphate. This Mesomycoplasma hyopneumoniae (strain 7448) (Mycoplasma hyopneumoniae) protein is Probable endonuclease 4.